Reading from the N-terminus, the 217-residue chain is Homeobox protein Hox-B7 (217 aa).

Positions 126–131 (IYPWMR) match the Antp-type hexapeptide motif. The segment at residues 137–196 (RKRGRQTYTRYQTLELEKEFHYNRYLTRRRRIEIAHTLCLTERQIKIWFQNRRMKWKKEN) is a DNA-binding region (homeobox). The disordered stretch occupies residues 192–217 (WKKENKTSGPGTTGQDKAEAEEEEEE).

Belongs to the Antp homeobox family. Forms a DNA-binding heterodimer with transcription factor PBX1.

Its subcellular location is the nucleus. In terms of biological role, sequence-specific transcription factor which is part of a developmental regulatory system that provides cells with specific positional identities on the anterior-posterior axis. The polypeptide is Homeobox protein Hox-B7 (Hoxb7) (Mus musculus (Mouse)).